Consider the following 205-residue polypeptide: Probable GTP-binding protein EngB (205 aa).

Positions 27 to 201 (TGIEIAFAGR…AVKLDFWFSP (175 aa)) constitute an EngB-type G domain. GTP-binding positions include 35–42 (GRSNAGKS), 62–66 (GRTQL), 80–83 (DLPG), 147–150 (TKAD), and 180–182 (FSA). Ser42 and Thr64 together coordinate Mg(2+).

It belongs to the TRAFAC class TrmE-Era-EngA-EngB-Septin-like GTPase superfamily. EngB GTPase family. It depends on Mg(2+) as a cofactor.

In terms of biological role, necessary for normal cell division and for the maintenance of normal septation. The polypeptide is Probable GTP-binding protein EngB (Haemophilus influenzae (strain PittGG)).